Consider the following 239-residue polypeptide: Ribonuclease PH (239 aa).

Phosphate is bound by residues R86 and 124–126 (GTR).

The protein belongs to the RNase PH family. Homohexameric ring arranged as a trimer of dimers.

The catalysed reaction is tRNA(n+1) + phosphate = tRNA(n) + a ribonucleoside 5'-diphosphate. Its function is as follows. Phosphorolytic 3'-5' exoribonuclease that plays an important role in tRNA 3'-end maturation. Removes nucleotide residues following the 3'-CCA terminus of tRNAs; can also add nucleotides to the ends of RNA molecules by using nucleoside diphosphates as substrates, but this may not be physiologically important. Probably plays a role in initiation of 16S rRNA degradation (leading to ribosome degradation) during starvation. The polypeptide is Ribonuclease PH (Allorhizobium ampelinum (strain ATCC BAA-846 / DSM 112012 / S4) (Agrobacterium vitis (strain S4))).